The primary structure comprises 48 residues: Sperm protamine P1 (48 aa).

This sequence belongs to the protamine P1 family. As to expression, testis.

The protein localises to the nucleus. The protein resides in the chromosome. Its function is as follows. Protamines substitute for histones in the chromatin of sperm during the haploid phase of spermatogenesis. They compact sperm DNA into a highly condensed, stable and inactive complex. The chain is Sperm protamine P1 (PRM1) from Murina cyclotis (Round-eared tube-nosed bat).